A 918-amino-acid chain; its full sequence is Serine/threonine-protein kinase D1 (918 aa).

Y93 carries the phosphotyrosine modification. The segment at 144–194 (PHALFVHSYRAPAFCDHCGEMLWGLVRQGLKCEGCGLNYHKRCAFKIPNNC) adopts a Phorbol-ester/DAG-type 1 zinc-finger fold. A phosphoserine mark is found at S203, S206, S217, and S221. The Phorbol-ester/DAG-type 2 zinc-finger motif lies at 276 to 326 (PHTFVIHSYTRPTVCQFCKKLLKGLFRQGLQCKDCRFNCHKRCAPKVPNNC). Disordered regions lie at residues 338 to 362 (SPGA…NSGL) and 380 to 408 (EGQS…STSN). Acidic residues-rich tracts occupy residues 345–355 (VVMEEGSDDND) and 387–396 (EMQDPDADQE). S351 is modified (phosphoserine). Residues S403 and S407 each carry the phosphoserine; by MAPK13 modification. The PH domain maps to 428–547 (TVMKEGWMVH…WEVAIQHALM (120 aa)). The residue at position 438 (Y438) is a Phosphotyrosine. S454 bears the Phosphoserine mark. Position 469 is a phosphotyrosine; by ABL (Y469). At Y508 the chain carries Phosphotyrosine. Phosphoserine is present on S554. One can recognise a Protein kinase domain in the interval 589–845 (IFPDEVLGSG…VDKTLSHPWL (257 aa)). ATP contacts are provided by residues 595 to 603 (LGSGQFGIV) and K618. Residue D712 is the Proton acceptor of the active site. Phosphoserine; by PKC/PRKCD is present on S744. S748 is modified (phosphoserine; by autocatalysis and PKC/PRKCD). Y755 carries the phosphotyrosine modification. S916 carries the post-translational modification Phosphoserine; by autocatalysis.

It belongs to the protein kinase superfamily. CAMK Ser/Thr protein kinase family. PKD subfamily. As to quaternary structure, interacts (via N-terminus) with ADAP1/CENTA1. Interacts with MAPK13. Interacts with DAPK1 in an oxidative stress-regulated manner. Interacts with USP28; the interaction induces phosphorylation of USP28 and activated KRAS-mediated stabilization of ZNF304. Interacts with AKAP13 (via C-terminal domain). The cofactor is Mg(2+). Post-translationally, phosphorylated at Ser-403 and Ser-407 by MAPK13 during regulation of insulin secretion in pancreatic beta cells. Phosphorylated by DAPK1. Phosphorylated at Tyr-93 and by ABL at Tyr-469, which primes the kinase in response to oxidative stress, and promotes a second step activating phosphorylation at Ser-744/Ser-748 by PKRD. Phosphorylated on Ser-916 upon S.enterica infection in macrophages.

It is found in the cytoplasm. Its subcellular location is the cell membrane. The protein resides in the golgi apparatus. It localises to the trans-Golgi network. It catalyses the reaction L-seryl-[protein] + ATP = O-phospho-L-seryl-[protein] + ADP + H(+). It carries out the reaction L-threonyl-[protein] + ATP = O-phospho-L-threonyl-[protein] + ADP + H(+). With respect to regulation, activated by DAG and phorbol esters. Phorbol-ester/DAG-type domain 1 binds DAG with high affinity and appears to play the dominant role in mediating translocation to the cell membrane and trans-Golgi network. Phorbol-ester/DAG-type domain 2 binds phorbol ester with higher affinity. Autophosphorylation of Ser-748 and phosphorylation of Ser-744 by PKC relieves auto-inhibition by the PH domain. Phosphorylation on Tyr-469 by the SRC-ABL1 pathway in response to oxidative stress, is also required for activation. Activated by DAPK1 under oxidative stress. Serine/threonine-protein kinase that converts transient diacylglycerol (DAG) signals into prolonged physiological effects downstream of PKC, and is involved in the regulation of MAPK8/JNK1 and Ras signaling, Golgi membrane integrity and trafficking, cell survival through NF-kappa-B activation, cell migration, cell differentiation by mediating HDAC7 nuclear export, cell proliferation via MAPK1/3 (ERK1/2) signaling, and plays a role in cardiac hypertrophy, VEGFA-induced angiogenesis, genotoxic-induced apoptosis and flagellin-stimulated inflammatory response. Phosphorylates the epidermal growth factor receptor (EGFR) on dual threonine residues, which leads to the suppression of epidermal growth factor (EGF)-induced MAPK8/JNK1 activation and subsequent JUN phosphorylation. Phosphorylates RIN1, inducing RIN1 binding to 14-3-3 proteins YWHAB, YWHAE and YWHAZ and increased competition with RAF1 for binding to GTP-bound form of Ras proteins (NRAS, HRAS and KRAS). Acts downstream of the heterotrimeric G-protein beta/gamma-subunit complex to maintain the structural integrity of the Golgi membranes, and is required for protein transport along the secretory pathway. In the trans-Golgi network (TGN), regulates the fission of transport vesicles that are on their way to the plasma membrane. May act by activating the lipid kinase phosphatidylinositol 4-kinase beta (PI4KB) at the TGN for the local synthesis of phosphorylated inositol lipids, which induces a sequential production of DAG, phosphatidic acid (PA) and lyso-PA (LPA) that are necessary for membrane fission and generation of specific transport carriers to the cell surface. Under oxidative stress, is phosphorylated at Tyr-469 via SRC-ABL1 and contributes to cell survival by activating IKK complex and subsequent nuclear translocation and activation of NFKB1. Involved in cell migration by regulating integrin alpha-5/beta-3 recycling and promoting its recruitment in newly forming focal adhesion. In osteoblast differentiation, mediates the bone morphogenetic protein 2 (BMP2)-induced nuclear export of HDAC7, which results in the inhibition of HDAC7 transcriptional repression of RUNX2. In neurons, plays an important role in neuronal polarity by regulating the biogenesis of TGN-derived dendritic vesicles, and is involved in the maintenance of dendritic arborization and Golgi structure in hippocampal cells. May potentiate mitogenesis induced by the neuropeptide bombesin or vasopressin by mediating an increase in the duration of MAPK1/3 (ERK1/2) signaling, which leads to accumulation of immediate-early gene products including FOS that stimulate cell cycle progression. Plays an important role in the proliferative response induced by low calcium in keratinocytes, through sustained activation of MAPK1/3 (ERK1/2) pathway. Downstream of novel PKC signaling, plays a role in cardiac hypertrophy by phosphorylating HDAC5, which in turn triggers XPO1/CRM1-dependent nuclear export of HDAC5, MEF2A transcriptional activation and induction of downstream target genes that promote myocyte hypertrophy and pathological cardiac remodeling. Mediates cardiac troponin I (TNNI3) phosphorylation at the PKA sites, which results in reduced myofilament calcium sensitivity, and accelerated crossbridge cycling kinetics. The PRKD1-HDAC5 pathway is also involved in angiogenesis by mediating VEGFA-induced specific subset of gene expression, cell migration, and tube formation. In response to VEGFA, is necessary and required for HDAC7 phosphorylation which induces HDAC7 nuclear export and endothelial cell proliferation and migration. During apoptosis induced by cytarabine and other genotoxic agents, PRKD1 is cleaved by caspase-3 at Asp-378, resulting in activation of its kinase function and increased sensitivity of cells to the cytotoxic effects of genotoxic agents. In epithelial cells, is required for transducing flagellin-stimulated inflammatory responses by binding and phosphorylating TLR5, which contributes to MAPK14/p38 activation and production of inflammatory cytokines. Acts as an activator of NLRP3 inflammasome assembly by mediating phosphorylation of NLRP3. May play a role in inflammatory response by mediating activation of NF-kappa-B. May be involved in pain transmission by directly modulating TRPV1 receptor. Plays a role in activated KRAS-mediated stabilization of ZNF304 in colorectal cancer (CRC) cells. Regulates nuclear translocation of transcription factor TFEB in macrophages upon live S.enterica infection. The chain is Serine/threonine-protein kinase D1 (Prkd1) from Rattus norvegicus (Rat).